The following is a 342-amino-acid chain: Flotillin-like protein FloA (342 aa).

2 consecutive transmembrane segments (helical) span residues phenylalanine 18–isoleucine 38 and serine 39–methionine 59.

It belongs to the flotillin-like FloA family. As to quaternary structure, homooligomerizes.

The protein resides in the cell membrane. The protein localises to the membrane raft. Found in functional membrane microdomains (FMM) that may be equivalent to eukaryotic membrane rafts. FMMs are highly dynamic and increase in number as cells age. Flotillins are thought to be important factors in membrane fluidity. The sequence is that of Flotillin-like protein FloA from Protochlamydia amoebophila (strain UWE25).